A 154-amino-acid polypeptide reads, in one-letter code: Myoglobin (154 aa).

The Globin domain maps to 2–148; that stretch reads GLSDGEWQLV…FRNDMAAKYK (147 aa). Ser4 is subject to Phosphoserine. His65 contributes to the nitrite binding site. His65 is a binding site for O2. Thr68 carries the phosphothreonine modification. His94 lines the heme b pocket.

It belongs to the globin family. In terms of assembly, monomeric.

Its subcellular location is the cytoplasm. It localises to the sarcoplasm. It catalyses the reaction Fe(III)-heme b-[protein] + nitric oxide + H2O = Fe(II)-heme b-[protein] + nitrite + 2 H(+). The catalysed reaction is H2O2 + AH2 = A + 2 H2O. Its function is as follows. Monomeric heme protein which primary function is to store oxygen and facilitate its diffusion within muscle tissues. Reversibly binds oxygen through a pentacoordinated heme iron and enables its timely and efficient release as needed during periods of heightened demand. Depending on the oxidative conditions of tissues and cells, and in addition to its ability to bind oxygen, it also has a nitrite reductase activity whereby it regulates the production of bioactive nitric oxide. Under stress conditions, like hypoxia and anoxia, it also protects cells against reactive oxygen species thanks to its pseudoperoxidase activity. The polypeptide is Myoglobin (MB) (Macaca fascicularis (Crab-eating macaque)).